The sequence spans 147 residues: Large ribosomal subunit protein uL13 (147 aa).

The protein belongs to the universal ribosomal protein uL13 family. In terms of assembly, part of the 50S ribosomal subunit.

This protein is one of the early assembly proteins of the 50S ribosomal subunit, although it is not seen to bind rRNA by itself. It is important during the early stages of 50S assembly. This Renibacterium salmoninarum (strain ATCC 33209 / DSM 20767 / JCM 11484 / NBRC 15589 / NCIMB 2235) protein is Large ribosomal subunit protein uL13.